The primary structure comprises 156 residues: MPRPKCCRTITGEPPCRAFTPAGTTGPAPSRVVLSEDEFEAVRLADFEGLYQEEAAERMGVSRQTFGRIVGAARAKIARVLVEGLALSIGGGGGTGIAPSRSYMCRLCRHTWDMPSETDSPAECPACRGRNLFRCGASLETAASGRECCPRERKAT.

The protein belongs to the UPF0251 family.

This is UPF0251 protein Sfum_2819 from Syntrophobacter fumaroxidans (strain DSM 10017 / MPOB).